The following is a 282-amino-acid chain: Probable porphobilinogen deaminase (282 aa).

Cys-233 is modified (S-(dipyrrolylmethanemethyl)cysteine).

It belongs to the HMBS family. Requires dipyrromethane as cofactor.

The enzyme catalyses 4 porphobilinogen + H2O = hydroxymethylbilane + 4 NH4(+). It functions in the pathway porphyrin-containing compound metabolism; protoporphyrin-IX biosynthesis; coproporphyrinogen-III from 5-aminolevulinate: step 2/4. Functionally, tetrapolymerization of the monopyrrole PBG into the hydroxymethylbilane pre-uroporphyrinogen in several discrete steps. The sequence is that of Probable porphobilinogen deaminase from Picrophilus torridus (strain ATCC 700027 / DSM 9790 / JCM 10055 / NBRC 100828 / KAW 2/3).